Reading from the N-terminus, the 150-residue chain is UPF0178 protein Sbal195_1808 (150 aa).

This sequence belongs to the UPF0178 family.

The polypeptide is UPF0178 protein Sbal195_1808 (Shewanella baltica (strain OS195)).